The primary structure comprises 118 residues: Putative pterin-4-alpha-carbinolamine dehydratase (118 aa).

Belongs to the pterin-4-alpha-carbinolamine dehydratase family.

The enzyme catalyses (4aS,6R)-4a-hydroxy-L-erythro-5,6,7,8-tetrahydrobiopterin = (6R)-L-erythro-6,7-dihydrobiopterin + H2O. The protein is Putative pterin-4-alpha-carbinolamine dehydratase of Xanthomonas oryzae pv. oryzae (strain MAFF 311018).